The sequence spans 143 residues: Transcriptional regulator MraZ (143 aa).

2 consecutive SpoVT-AbrB domains span residues 5 to 47 (EYQH…PQEE) and 76 to 119 (ASEC…SKSE).

The protein belongs to the MraZ family. As to quaternary structure, forms oligomers.

It is found in the cytoplasm. The protein resides in the nucleoid. The chain is Transcriptional regulator MraZ from Listeria monocytogenes serotype 4b (strain CLIP80459).